The primary structure comprises 551 residues: Hedycaryol synthase TPS20CT (551 aa).

(2E,6E)-farnesyl diphosphate-binding residues include Arg266, Asp303, Asp307, Arg444, and Asp447. Mg(2+) is bound by residues Asp303 and Asp307. Residues 303–307 carry the DDXXD motif motif; sequence DDIYD. Mg(2+) is bound by residues Asp447, Ser451, and Glu455.

It belongs to the terpene synthase family. Tpsb subfamily. Mg(2+) is required as a cofactor. Mn(2+) serves as cofactor. Highly expressed in glandular trichomes.

It catalyses the reaction (2E,6E)-farnesyl diphosphate + H2O = (2E,6E)-hedycaryol + diphosphate. The protein operates within secondary metabolite biosynthesis; terpenoid biosynthesis. Involved in sesquiterpene olefins biosynthesis, constituants of cannabinoids and terpenoids-rich resins. Catalyzes primarily the conversion of (2E)-farnesyl diphosphate to hedycaryol, which is spontaneously converted to elemol as a thermal degradation product. This Cannabis sativa (Hemp) protein is Hedycaryol synthase TPS20CT.